The sequence spans 366 residues: 4-hydroxy-3-methylbut-2-en-1-yl diphosphate synthase (flavodoxin) (366 aa).

Positions 270, 273, 305, and 312 each coordinate [4Fe-4S] cluster.

The protein belongs to the IspG family. Requires [4Fe-4S] cluster as cofactor.

The enzyme catalyses (2E)-4-hydroxy-3-methylbut-2-enyl diphosphate + oxidized [flavodoxin] + H2O + 2 H(+) = 2-C-methyl-D-erythritol 2,4-cyclic diphosphate + reduced [flavodoxin]. The protein operates within isoprenoid biosynthesis; isopentenyl diphosphate biosynthesis via DXP pathway; isopentenyl diphosphate from 1-deoxy-D-xylulose 5-phosphate: step 5/6. In terms of biological role, converts 2C-methyl-D-erythritol 2,4-cyclodiphosphate (ME-2,4cPP) into 1-hydroxy-2-methyl-2-(E)-butenyl 4-diphosphate. This chain is 4-hydroxy-3-methylbut-2-en-1-yl diphosphate synthase (flavodoxin), found in Acidithiobacillus ferrooxidans (strain ATCC 53993 / BNL-5-31) (Leptospirillum ferrooxidans (ATCC 53993)).